The following is a 179-amino-acid chain: GTP-dependent dephospho-CoA kinase (179 aa).

Asp-55, Val-57, Asp-74, Lys-76, and Glu-128 together coordinate GTP.

Belongs to the GTP-dependent DPCK family.

The catalysed reaction is 3'-dephospho-CoA + GTP = GDP + CoA + H(+). It participates in cofactor biosynthesis; coenzyme A biosynthesis. Functionally, catalyzes the GTP-dependent phosphorylation of the 3'-hydroxyl group of dephosphocoenzyme A to form coenzyme A (CoA). This chain is GTP-dependent dephospho-CoA kinase, found in Saccharolobus solfataricus (strain ATCC 35092 / DSM 1617 / JCM 11322 / P2) (Sulfolobus solfataricus).